Consider the following 284-residue polypeptide: Putative transcription factor kapC (284 aa).

Over residues 1 to 10 the composition is skewed to pro residues; the sequence is MQPTLAPAPH. The segment at 1–121 is disordered; it reads MQPTLAPAPH…NRAAQRAFRQ (121 aa). Over residues 26–40 the composition is skewed to low complexity; sequence HDQLLAAHQHLSHPQ. Pro residues predominate over residues 41–54; sequence QPRPQPPAAQPPHM. The span at 57-67 shows a compositional bias: polar residues; the sequence is NTTSPRDQNNI. Residues 102 to 165 form the bZIP domain; the sequence is PLSTSKRAAQ…EYIINLQSRL (64 aa). The interval 103–126 is basic motif; it reads LSTSKRAAQNRAAQRAFRQRKESY. Residues 108 to 118 are compositionally biased toward low complexity; it reads RAAQNRAAQRA. The tract at residues 130–161 is leucine-zipper; the sequence is LEEQVKEFDTMSEAFKALQAENYQLREYIINL. The segment at 174–284 is disordered; sequence ELPGNIDLSQ…QAPHGLPMVS (111 aa). Positions 193–222 are enriched in low complexity; it reads PGAGPATTSSSAPAPPSGAQQAQPPQGAAS.

The protein belongs to the bZIP family.

It is found in the nucleus. In terms of biological role, putative transcription factor. This chain is Putative transcription factor kapC (kapC), found in Aspergillus oryzae (strain ATCC 42149 / RIB 40) (Yellow koji mold).